We begin with the raw amino-acid sequence, 257 residues long: MARVVVITGGGTGIGAACARLMHPAGERVFITGRRDAVRAVANETGATALVAMPPTARCGASGCCRRSSTRPAGLMSSSAAPAGWATAPPPRPATANEREALDGNLTSAFASVRACLPSLIARRGNVLFVASIASLAAGPQACGYVTAKHALIGLMRSVARDYGPQGVRANAICPGWVTTPMADEEMHPLMQAEGLSLTEAYQRVCRDVPLRRPASPEEIAQACQFLCSPQAAIISGATLVADGGASIVDVPTLAFA.

6–29 lines the NAD(+) pocket; that stretch reads VITGGGTGIGAACARLMHPAGERV. The segment at 75-96 is disordered; it reads LMSSSAAPAGWATAPPPRPATA. Position 132 (Ser-132) interacts with substrate. The active-site Proton acceptor is the Tyr-145.

It belongs to the short-chain dehydrogenases/reductases (SDR) family.

Might catalyze the conversion of monoamine compounds or their metabolites. This Klebsiella aerogenes (Enterobacter aerogenes) protein is Protein MoaE (moaE).